We begin with the raw amino-acid sequence, 512 residues long: ATP synthase subunit alpha (512 aa).

Residue glycine 169–threonine 176 participates in ATP binding.

Belongs to the ATPase alpha/beta chains family. As to quaternary structure, F-type ATPases have 2 components, CF(1) - the catalytic core - and CF(0) - the membrane proton channel. CF(1) has five subunits: alpha(3), beta(3), gamma(1), delta(1), epsilon(1). CF(0) has three main subunits: a(1), b(2) and c(9-12). The alpha and beta chains form an alternating ring which encloses part of the gamma chain. CF(1) is attached to CF(0) by a central stalk formed by the gamma and epsilon chains, while a peripheral stalk is formed by the delta and b chains.

The protein localises to the cell inner membrane. It catalyses the reaction ATP + H2O + 4 H(+)(in) = ADP + phosphate + 5 H(+)(out). Produces ATP from ADP in the presence of a proton gradient across the membrane. The alpha chain is a regulatory subunit. In Orientia tsutsugamushi (strain Ikeda) (Rickettsia tsutsugamushi), this protein is ATP synthase subunit alpha.